The primary structure comprises 231 residues: Ribose-5-phosphate isomerase A (231 aa).

Residues 23–26 (SGST), 80–83 (DGAD), and 93–96 (KGGG) contribute to the substrate site. Glu-102 functions as the Proton acceptor in the catalytic mechanism. Substrate is bound at residue Lys-120.

Belongs to the ribose 5-phosphate isomerase family. Homodimer.

The enzyme catalyses aldehydo-D-ribose 5-phosphate = D-ribulose 5-phosphate. Its pathway is carbohydrate degradation; pentose phosphate pathway; D-ribose 5-phosphate from D-ribulose 5-phosphate (non-oxidative stage): step 1/1. Its function is as follows. Catalyzes the reversible conversion of ribose-5-phosphate to ribulose 5-phosphate. This chain is Ribose-5-phosphate isomerase A, found in Prochlorococcus marinus subsp. pastoris (strain CCMP1986 / NIES-2087 / MED4).